Reading from the N-terminus, the 375-residue chain is Ketohexokinase (375 aa).

Residue Asp319 coordinates beta-D-fructose.

This sequence belongs to the carbohydrate kinase PfkB family. In terms of assembly, homodimer.

It catalyses the reaction beta-D-fructose + ATP = beta-D-fructose 1-phosphate + ADP + H(+). Its pathway is carbohydrate metabolism; fructose metabolism. With respect to regulation, activated in the presence of 0.5 M KCl. 85% activity at 3.5 M KCl. 60% activity without KCl. Catalyzes the ATP-dependent phosphorylation of the ketose sugar fructose to fructose-1-phosphate. Does not produce fructose-6-phosphate. The sugars D-glucose, D-galactose, L-rhamnose, D-xylose, L-arabinose and D-ribose are not substrates of this enzyme. The sequence is that of Ketohexokinase from Haloferax volcanii (strain ATCC 29605 / DSM 3757 / JCM 8879 / NBRC 14742 / NCIMB 2012 / VKM B-1768 / DS2) (Halobacterium volcanii).